Reading from the N-terminus, the 350-residue chain is Solute carrier family 35 member E4 (350 aa).

Over residues 19–30 (GAAAGGAQAAGP) the composition is skewed to low complexity. The interval 19–42 (GAAAGGAQAAGPPEWPPGSPQALR) is disordered. The next 8 helical transmembrane spans lie at 51–71 (MAAL…KWIF), 73–93 (VHGF…AALA), 110–132 (VLLL…RAVP), 135–155 (LAQL…ALLL), 218–238 (VTLL…AALV), 258–278 (ILLS…LLAL), 279–299 (TSAL…LILS), and 312–332 (YVGI…EFVA). Residues 125 to 179 (NVGLRAVPLDLAQLVTTTTPLFTLALSALLLGRRHHPLQLAAMGPLCLGAACSLA) enclose the EamA domain.

It belongs to the TPT transporter family. SLC35E subfamily.

It localises to the membrane. Putative transporter. The sequence is that of Solute carrier family 35 member E4 (SLC35E4) from Homo sapiens (Human).